A 437-amino-acid chain; its full sequence is Transcription factor E2F2 (437 aa).

Residues Ala-65–Pro-105 form a cyclin A/CDK2 binding region. The DNA-binding element occupies Gly-107–Gly-196. The interval Leu-155–Leu-176 is leucine-zipper. The short motif at Glu-160–Gly-196 is the DEF box element. A dimerization region spans residues Met-197–Ile-289. The disordered stretch occupies residues Val-307 to Leu-368. Positions Glu-315–Ser-330 are enriched in low complexity. A compositionally biased stretch (pro residues) spans Ala-351–Leu-365. The tract at residues Ala-359 to Asn-437 is transactivation. The tract at residues Asp-410–Asp-427 is retinoblastoma protein binding.

The protein belongs to the E2F/DP family. Component of the DRTF1/E2F transcription factor complex. Forms heterodimers with DP family members. The E2F2 complex binds specifically hypophosphorylated retinoblastoma protein RB1. During the cell cycle, RB1 becomes phosphorylated in mid-to-late G1 phase, detaches from the DRTF1/E2F complex, rendering E2F transcriptionally active. Viral oncoproteins, notably E1A, T-antigen and HPV E7, are capable of sequestering RB1, thus releasing the active complex. Binds EAPP. Phosphorylated by CDK2 and cyclin A-CDK2 in the S-phase. As to expression, highest level of expression is found in placenta, low levels are found in lung. Found as well in many immortalized cell lines derived from tumor samples.

Its subcellular location is the nucleus. Its function is as follows. Transcription activator that binds DNA cooperatively with DP proteins through the E2 recognition site, 5'-TTTC[CG]CGC-3' found in the promoter region of a number of genes whose products are involved in cell cycle regulation or in DNA replication. The DRTF1/E2F complex functions in the control of cell-cycle progression from g1 to s phase. E2F2 binds specifically to RB1 in a cell-cycle dependent manner. This chain is Transcription factor E2F2 (E2F2), found in Homo sapiens (Human).